The chain runs to 647 residues: Chaperone protein DnaK (647 aa).

T199 is modified (phosphothreonine; by autocatalysis). Positions 602–647 are disordered; it reads MYAQEQAQAGQQAGPGAGSASAGQSGEKPVEGEVVDAEFEEVKDKK. Residues 604–627 show a composition bias toward low complexity; sequence AQEQAQAGQQAGPGAGSASAGQSG.

The protein belongs to the heat shock protein 70 family.

Functionally, acts as a chaperone. In Nitrosomonas eutropha (strain DSM 101675 / C91 / Nm57), this protein is Chaperone protein DnaK.